The following is a 327-amino-acid chain: Interleukin-12 subunit beta (327 aa).

An N-terminal signal peptide occupies residues 1–22 (MCHQKLTISWFAVVLLASPLMA). Residues 23 to 106 (IWELEKDVYV…LSHSRLLLHK (84 aa)) form the Ig-like C2-type domain. Cys-50 and Cys-90 form a disulfide bridge. N-linked (GlcNAc...) asparagine glycans are attached at residues Asn-125, Asn-135, Asn-223, and Asn-315. Residues 238–327 (PPKNLQLKPL…WSRWVSVPCS (90 aa)) form the Fibronectin type-III domain.

It belongs to the IL-12B family. In terms of assembly, heterodimer with IL12A; disulfide-linked. The heterodimer is known as interleukin IL-12. Heterodimer with IL23A; disulfide-linked. The heterodimer is known as interleukin IL-23. Also secreted as a monomer. Interacts with NBR1; this interaction promotes IL-12 secretion.

The protein localises to the secreted. In terms of biological role, cytokine that can act as a growth factor for activated T and NK cells, enhance the lytic activity of NK/lymphokine-activated killer cells, and stimulate the production of IFN-gamma by resting PBMC. Its function is as follows. Associates with IL23A to form the IL-23 interleukin, a heterodimeric cytokine which functions in innate and adaptive immunity. IL-23 may constitute with IL-17 an acute response to infection in peripheral tissues. IL-23 binds to a heterodimeric receptor complex composed of IL12RB1 and IL23R, activates the Jak-Stat signaling cascade, stimulates memory rather than naive T-cells and promotes production of pro-inflammatory cytokines. IL-23 induces autoimmune inflammation and thus may be responsible for autoimmune inflammatory diseases and may be important for tumorigenesis. The polypeptide is Interleukin-12 subunit beta (IL12B) (Mesocricetus auratus (Golden hamster)).